A 242-amino-acid chain; its full sequence is Large ribosomal subunit protein uL3 (242 aa).

A disordered region spans residues 131 to 165 (GRATHGNSVSHRTHGSTGQRQDPGKVFKGKKMAGH). Polar residues predominate over residues 135–150 (HGNSVSHRTHGSTGQR). Gln-151 carries the post-translational modification N5-methylglutamine.

It belongs to the universal ribosomal protein uL3 family. Part of the 50S ribosomal subunit. Forms a cluster with proteins L14 and L19. Methylated by PrmB.

One of the primary rRNA binding proteins, it binds directly near the 3'-end of the 23S rRNA, where it nucleates assembly of the 50S subunit. In Chelativorans sp. (strain BNC1), this protein is Large ribosomal subunit protein uL3.